Consider the following 32-residue polypeptide: Calcitonin (32 aa).

Cys1 and Cys7 form a disulfide bridge. Pro32 bears the Proline amide mark.

This sequence belongs to the calcitonin family.

The protein localises to the secreted. Its function is as follows. Calcitonin is a peptide hormone that causes a rapid but short-lived drop in the level of calcium and phosphate in blood by promoting the incorporation of those ions in the bones. Calcitonin function is mediated by the calcitonin receptor/CALCR and the CALCR-RAMP2 (AMYR2) receptor complex. This is Calcitonin (CALCA) from Bos taurus (Bovine).